A 411-amino-acid chain; its full sequence is Na(+)-translocating NADH-quinone reductase subunit F (411 aa).

The chain crosses the membrane as a helical span at residues 5–25; that stretch reads VILALGIAAFTVIVLVLVAII. Residues 36 to 130 enclose the 2Fe-2S ferredoxin-type domain; sequence GDITIDINDD…NMEVELPEEI (95 aa). Positions 73, 79, 82, and 114 each coordinate [2Fe-2S] cluster. The FAD-binding FR-type domain occupies 133-273; the sequence is VKKWECTVIS…SGPFGEFFAK (141 aa).

This sequence belongs to the NqrF family. In terms of assembly, composed of six subunits; NqrA, NqrB, NqrC, NqrD, NqrE and NqrF. The cofactor is [2Fe-2S] cluster. FAD serves as cofactor.

Its subcellular location is the cell inner membrane. The enzyme catalyses a ubiquinone + n Na(+)(in) + NADH + H(+) = a ubiquinol + n Na(+)(out) + NAD(+). Functionally, NQR complex catalyzes the reduction of ubiquinone-1 to ubiquinol by two successive reactions, coupled with the transport of Na(+) ions from the cytoplasm to the periplasm. The first step is catalyzed by NqrF, which accepts electrons from NADH and reduces ubiquinone-1 to ubisemiquinone by a one-electron transfer pathway. This chain is Na(+)-translocating NADH-quinone reductase subunit F, found in Haemophilus influenzae (strain PittGG).